We begin with the raw amino-acid sequence, 329 residues long: tRNA-modifying protein YgfZ (329 aa).

Residues W32 and W190 each contribute to the folate site.

Belongs to the tRNA-modifying YgfZ family.

The protein localises to the cytoplasm. Its function is as follows. Folate-binding protein involved in regulating the level of ATP-DnaA and in the modification of some tRNAs. It is probably a key factor in regulatory networks that act via tRNA modification, such as initiation of chromosomal replication. This chain is tRNA-modifying protein YgfZ, found in Photobacterium profundum (strain SS9).